We begin with the raw amino-acid sequence, 692 residues long: Elongation factor G (692 aa).

Residues 8-282 (EKTRNIGIMA…AVVEYMPAPT (275 aa)) form the tr-type G domain. GTP is bound by residues 17–24 (AHIDAGKT), 81–85 (DTPGH), and 135–138 (NKMD). The segment at 285–304 (PNIKGVHPETGEADERHSSD) is disordered. A compositionally biased stretch (basic and acidic residues) spans 290 to 304 (VHPETGEADERHSSD).

The protein belongs to the TRAFAC class translation factor GTPase superfamily. Classic translation factor GTPase family. EF-G/EF-2 subfamily.

It is found in the cytoplasm. Its function is as follows. Catalyzes the GTP-dependent ribosomal translocation step during translation elongation. During this step, the ribosome changes from the pre-translocational (PRE) to the post-translocational (POST) state as the newly formed A-site-bound peptidyl-tRNA and P-site-bound deacylated tRNA move to the P and E sites, respectively. Catalyzes the coordinated movement of the two tRNA molecules, the mRNA and conformational changes in the ribosome. This chain is Elongation factor G, found in Desulfitobacterium hafniense (strain DSM 10664 / DCB-2).